A 233-amino-acid chain; its full sequence is MKLFDYAPLSLAWREFLQSEFKKPYFLEIEKRYLEALKSPKTIFPKSSNLFYALNLTPPSAVKIILLGQDPYHSTYLENEQELPVAMGLSFSVEKNAPIPPSLKNIFKELHANLGVPVPCCGDLSAWAKRGMLLLNAILSVEKNQAASHQYIGWEAFSDQILMRLFKTTAPLIVVLLGKVAQKKIALIPKNKHIIITAPHPSPLSRGFLGSGVFSSVQKAYREVYRKDFDFSL.

The active-site Proton acceptor is Asp70.

This sequence belongs to the uracil-DNA glycosylase (UDG) superfamily. UNG family.

The protein resides in the cytoplasm. It carries out the reaction Hydrolyzes single-stranded DNA or mismatched double-stranded DNA and polynucleotides, releasing free uracil.. In terms of biological role, excises uracil residues from the DNA which can arise as a result of misincorporation of dUMP residues by DNA polymerase or due to deamination of cytosine. The chain is Uracil-DNA glycosylase from Helicobacter pylori (strain G27).